Reading from the N-terminus, the 519-residue chain is MALANFIDRAATAASQVLTDFHLGDFKAALEKQVVAVAFDDQAASCAEGQATLDLAVRLLARLYPVLAILPLDSASSFQAQALERLAKSINPKIGIRRSGKSAMVCLVAGATRPSLRCTTFFIGSDGWAAKLSRTDPVGSGSSLLPYGAGAASCFGAANVFRTIFAAQLTGAELDPDIDLSLYSYNKTKARDARPVDLPVDLGETHLVGLGAIGHGALWALARQSGLSGRLHVVDHEAVELSNLQRYVLAGQAEIGMSKAVLATTALRSTALEVEAHPLKWAEHVARRGDWIFDRVGVALDTAADRLAVQGALPRWIANAWTQEHDLGISRHGFDDGQACLCCMYMPSGKSKDEHQLIAEELGIPETHEQVKALLQTNAGVPNDFVVRVATAMGVPFEPLAPFVGQPLRSFYQQAICGGLVFQLSDGSRLVRTVVPMAFQSALAGIMLAAELVKHSAGFPMSPTTSTRVNLLRPLGSHLHDPKAKDSSGRCICSDEDFISAYRRKYGNSVEPLSNISAT.

4 consecutive transmembrane segments (helical) span residues 141–161 (GSSLLPYGAGAASCFGAANVF), 202–222 (LGETHLVGLGAIGHGALWALA), 385–405 (FVVRVATAMGVPFEPLAPFVG), and 433–453 (TVVPMAFQSALAGIMLAAELV).

It is found in the cell membrane. This is an uncharacterized protein from Sinorhizobium fredii (strain NBRC 101917 / NGR234).